We begin with the raw amino-acid sequence, 569 residues long: ABC1 family protein MCP2 (569 aa).

Residues 1 to 18 constitute a mitochondrion transit peptide; sequence MMTKAFFNKLPFEVFRRY. Over 19–34 the chain is Mitochondrial matrix; the sequence is VRTGKSIPQRSPRTRK. The chain crosses the membrane as a helical span at residues 35–51; that stretch reads SLLVGGTIASAVVLYNF. Residues 52 to 569 lie on the Mitochondrial intermembrane side of the membrane; that stretch reads NDTFHDSVKH…KFIPKTWLSS (518 aa).

This sequence belongs to the protein kinase superfamily. ADCK protein kinase family.

Its subcellular location is the mitochondrion. It is found in the mitochondrion inner membrane. Functionally, component of MIOREX complexes, large expressome-like assemblies of ribosomes with factors involved in all the steps of post-transcriptional gene expression. Involved in mitochondrial lipid homeostasis. This Saccharomyces cerevisiae (strain ATCC 204508 / S288c) (Baker's yeast) protein is ABC1 family protein MCP2.